We begin with the raw amino-acid sequence, 260 residues long: MAGSPLLWGPRAGGVGLLVLLLLGLFRPPPALCARPVKEPRGLSAASPPLAETGAPRRFRRSVPRGEAAGAVQELARALAHLLEAERQERARAEAQEAEDQQARVLAQLLRVWGAPRNSDPALGLDDDPDAPAAQLARALLRARLDPAALAAQLVPAPVPAAALRPRPPVYDDGPAGPDAEEAGDETPDVDPELLRYLLGRILAGSADSEGVAAPRRLRRAADHDVGSELPPEGVLGALLRVKRLETPAPQVPARRLLPP.

An N-terminal signal peptide occupies residues 1-33 (MAGSPLLWGPRAGGVGLLVLLLLGLFRPPPALC). The proSAAS(1-180) stretch occupies residues 34-215 (ARPVKEPRGL…SADSEGVAAP (182 aa)). Residue Thr53 is glycosylated (O-linked (GalNAc...) threonine). Residues 165 to 188 (RPRPPVYDDGPAGPDAEEAGDETP) form a disordered region. Positions 179 to 188 (DAEEAGDETP) are enriched in acidic residues. Residues 221–260 (AADHDVGSELPPEGVLGALLRVKRLETPAPQVPARRLLPP) form a C-terminal inhibitory domain; interacts with PCSK1 region. Ser228 is a glycosylation site (O-linked (GalNAc...) serine). A Sufficient for inhibition of PCSK1 motif is present at residues 239–244 (LLRVKR). A glycan (O-linked (GalNAc...) threonine) is linked at Thr247.

Interacts via the C-terminal inhibitory domain with PCSK1 66 kDa form. Post-translationally, proteolytically cleaved in the Golgi. In terms of processing, O-glycosylated with a core 1 or possibly core 8 glycan. Expressed in brain and pancreas.

It is found in the secreted. It localises to the golgi apparatus. The protein localises to the trans-Golgi network. Its function is as follows. May function in the control of the neuroendocrine secretory pathway. Proposed be a specific endogenous inhibitor of PCSK1. ProSAAS and Big PEN-LEN, both containing the C-terminal inhibitory domain, but not the further processed peptides reduce PCSK1 activity in the endoplasmic reticulum and Golgi. It reduces the activity of the 84 kDa form but not the autocatalytically derived 66 kDa form of PCSK1. Subsequent processing of proSAAS may eliminate the inhibition. Slows down convertase-mediated processing of proopiomelanocortin and proenkephalin. May control the intracellular timing of PCSK1 rather than its total level of activity. In terms of biological role, endogenous ligand for GPR171. Neuropeptide involved in the regulation of feeding. The polypeptide is ProSAAS (PCSK1N) (Homo sapiens (Human)).